Here is a 112-residue protein sequence, read N- to C-terminus: uncharacterized protein (112 aa).

2 N-linked (GlcNAc...) asparagine; by host glycosylation sites follow: N29 and N60. Residues 66 to 86 (IFNGLGFILIVIFIYLLLITL) traverse the membrane as a helical segment.

It belongs to the asfivirus B117L family.

It localises to the host membrane. It is found in the virion. This is an uncharacterized protein from Ornithodoros (relapsing fever ticks).